The sequence spans 206 residues: Thiamine-phosphate synthase (206 aa).

4-amino-2-methyl-5-(diphosphooxymethyl)pyrimidine-binding positions include 35 to 39 and N67; that span reads QLRDK. The Mg(2+) site is built by D68 and D87. S106 is a binding site for 4-amino-2-methyl-5-(diphosphooxymethyl)pyrimidine. 132–134 serves as a coordination point for 2-[(2R,5Z)-2-carboxy-4-methylthiazol-5(2H)-ylidene]ethyl phosphate; that stretch reads TGT. Residue K135 coordinates 4-amino-2-methyl-5-(diphosphooxymethyl)pyrimidine. 2-[(2R,5Z)-2-carboxy-4-methylthiazol-5(2H)-ylidene]ethyl phosphate-binding positions include G163 and 183-184; that span reads IS.

Belongs to the thiamine-phosphate synthase family. Requires Mg(2+) as cofactor.

It carries out the reaction 2-[(2R,5Z)-2-carboxy-4-methylthiazol-5(2H)-ylidene]ethyl phosphate + 4-amino-2-methyl-5-(diphosphooxymethyl)pyrimidine + 2 H(+) = thiamine phosphate + CO2 + diphosphate. The catalysed reaction is 2-(2-carboxy-4-methylthiazol-5-yl)ethyl phosphate + 4-amino-2-methyl-5-(diphosphooxymethyl)pyrimidine + 2 H(+) = thiamine phosphate + CO2 + diphosphate. It catalyses the reaction 4-methyl-5-(2-phosphooxyethyl)-thiazole + 4-amino-2-methyl-5-(diphosphooxymethyl)pyrimidine + H(+) = thiamine phosphate + diphosphate. It participates in cofactor biosynthesis; thiamine diphosphate biosynthesis; thiamine phosphate from 4-amino-2-methyl-5-diphosphomethylpyrimidine and 4-methyl-5-(2-phosphoethyl)-thiazole: step 1/1. In terms of biological role, condenses 4-methyl-5-(beta-hydroxyethyl)thiazole monophosphate (THZ-P) and 2-methyl-4-amino-5-hydroxymethyl pyrimidine pyrophosphate (HMP-PP) to form thiamine monophosphate (TMP). In Methanospirillum hungatei JF-1 (strain ATCC 27890 / DSM 864 / NBRC 100397 / JF-1), this protein is Thiamine-phosphate synthase.